Consider the following 299-residue polypeptide: uncharacterized protein (299 aa).

A helical membrane pass occupies residues 4–20; it reads LFFIFVMLIVLLCGCTS.

The protein resides in the membrane. This is an uncharacterized protein from Methanocaldococcus jannaschii (strain ATCC 43067 / DSM 2661 / JAL-1 / JCM 10045 / NBRC 100440) (Methanococcus jannaschii).